We begin with the raw amino-acid sequence, 360 residues long: Ubiquitin carboxyl-terminal hydrolase MIY1 (360 aa).

Residue C28 is the Nucleophile of the active site. The active-site Proton acceptor is the H216. Positions 317-360 are disordered; sequence KRKIHSHKKNSEIHAPVKKDKFKRRSSLLNAKASEKEKSECVVM. Composition is skewed to basic and acidic residues over residues 325 to 335 and 349 to 360; these read KNSEIHAPVKK and ASEKEKSECVVM.

This sequence belongs to the MINDY deubiquitinase family. FAM63 subfamily.

The protein resides in the cytoplasm. It carries out the reaction Thiol-dependent hydrolysis of ester, thioester, amide, peptide and isopeptide bonds formed by the C-terminal Gly of ubiquitin (a 76-residue protein attached to proteins as an intracellular targeting signal).. Its function is as follows. Hydrolase that can specifically remove 'Lys-48'-linked conjugated ubiquitin from proteins. Has endodeubiquitinase activity. This is Ubiquitin carboxyl-terminal hydrolase MIY1 from Saccharomyces cerevisiae (strain ATCC 204508 / S288c) (Baker's yeast).